We begin with the raw amino-acid sequence, 314 residues long: tRNA dimethylallyltransferase (314 aa).

Residue 12-19 participates in ATP binding; sequence GPTAAGKS. 14-19 contributes to the substrate binding site; the sequence is TAAGKS. Interaction with substrate tRNA stretches follow at residues 37 to 40, 161 to 165, and 245 to 250; these read DSAT, QRIQR, and RCVGYR.

Belongs to the IPP transferase family. In terms of assembly, monomer. Mg(2+) is required as a cofactor.

It catalyses the reaction adenosine(37) in tRNA + dimethylallyl diphosphate = N(6)-dimethylallyladenosine(37) in tRNA + diphosphate. Its function is as follows. Catalyzes the transfer of a dimethylallyl group onto the adenine at position 37 in tRNAs that read codons beginning with uridine, leading to the formation of N6-(dimethylallyl)adenosine (i(6)A). In Bordetella petrii (strain ATCC BAA-461 / DSM 12804 / CCUG 43448), this protein is tRNA dimethylallyltransferase.